The sequence spans 171 residues: Co-chaperone protein HscB (171 aa).

Residues 2 to 74 (DYFTFFGLPA…LMRAEYLLSL (73 aa)) form the J domain.

Belongs to the HscB family. Interacts with HscA and stimulates its ATPase activity. Interacts with IscU.

In terms of biological role, co-chaperone involved in the maturation of iron-sulfur cluster-containing proteins. Seems to help targeting proteins to be folded toward HscA. The chain is Co-chaperone protein HscB from Shigella sonnei (strain Ss046).